We begin with the raw amino-acid sequence, 315 residues long: Aspartate carbamoyltransferase catalytic subunit (315 aa).

Carbamoyl phosphate-binding residues include arginine 55 and threonine 56. Position 83 (lysine 83) interacts with L-aspartate. 3 residues coordinate carbamoyl phosphate: arginine 105, histidine 138, and glutamine 141. Positions 171 and 225 each coordinate L-aspartate. Carbamoyl phosphate is bound by residues glycine 266 and proline 267.

It belongs to the aspartate/ornithine carbamoyltransferase superfamily. ATCase family. Heterododecamer (2C3:3R2) of six catalytic PyrB chains organized as two trimers (C3), and six regulatory PyrI chains organized as three dimers (R2).

The enzyme catalyses carbamoyl phosphate + L-aspartate = N-carbamoyl-L-aspartate + phosphate + H(+). Its pathway is pyrimidine metabolism; UMP biosynthesis via de novo pathway; (S)-dihydroorotate from bicarbonate: step 2/3. Functionally, catalyzes the condensation of carbamoyl phosphate and aspartate to form carbamoyl aspartate and inorganic phosphate, the committed step in the de novo pyrimidine nucleotide biosynthesis pathway. This chain is Aspartate carbamoyltransferase catalytic subunit, found in Mycolicibacterium gilvum (strain PYR-GCK) (Mycobacterium gilvum (strain PYR-GCK)).